Consider the following 216-residue polypeptide: Somatotropin (216 aa).

A signal peptide spans 1-26; the sequence is MAAGPRTSMLLAFALLCLPWTQEVGA. His45 lines the Zn(2+) pocket. Cys78 and Cys189 form a disulfide bridge. Ser131 carries the phosphoserine modification. A Zn(2+)-binding site is contributed by Glu198. A disulfide bond links Cys206 and Cys214.

It belongs to the somatotropin/prolactin family.

The protein resides in the secreted. In terms of biological role, plays an important role in growth control. Its major role in stimulating body growth is to stimulate the liver and other tissues to secrete IGF1. It stimulates both the differentiation and proliferation of myoblasts. It also stimulates amino acid uptake and protein synthesis in muscle and other tissues. The protein is Somatotropin (GH1) of Balaenoptera physalus (Fin whale).